The primary structure comprises 482 residues: Pre-glycoprotein polyprotein GP complex (482 aa).

A lipid anchor (N-myristoyl glycine; by host) is attached at Gly2. The Extracellular segment spans residues 2–17; that stretch reads GQFISFMQEIPIFLQE. Residues 18-32 form a helical membrane-spanning segment; sequence ALNIALVAVSLICIV. Lys33 is a topological domain (cytoplasmic). The helical transmembrane segment at 34 to 53 threads the bilayer; the sequence is GLVNLYRCGLFQLMVFLVLA. Extracellular segments lie at residues 54-58 and 59-421; these read GRSCS and EETF…TLVD. Cys57 provides a ligand contact to Zn(2+). N-linked (GlcNAc...) asparagine; by host glycans are attached at residues Asn83 and Asn95. Cystine bridges form between Cys92-Cys224, Cys134-Cys162, Cys205-Cys211, Cys269-Cys282, and Cys353-Cys374. 2 N-linked (GlcNAc...) asparagine; by host glycosylation sites follow: Asn164 and Asn176. Asn354, Asn362, Asn379, and Asn384 each carry an N-linked (GlcNAc...) asparagine; by host glycan. Residues 422–442 traverse the membrane as a helical segment; the sequence is ICFWSTEFFISTLFLHLIGFP. Residues 443–482 lie on the Cytoplasmic side of the membrane; sequence THEHIRGEGCPLPHRLNSMGGCRCGKYLPLKKPTIWHRRH. His444, His446, Cys452, His456, Cys464, Cys466, and His482 together coordinate Zn(2+).

It belongs to the arenaviridae GPC protein family. Homotetramer; disulfide-linked. In terms of assembly, homotetramer. GP2 homotetramers bind through ionic interactions with GP1 homotetramers to form the GP complex together with the stable signal peptide. The GP-C polyprotein interacts with the host protease MBTPS1/SKI-1 resulting in the polyprotein processing. In terms of processing, specific enzymatic cleavages in vivo yield mature proteins. GP-C polyprotein is cleaved in the endoplasmic reticulum by the host protease MBTPS1. Only cleaved glycoprotein is incorporated into virions. The SSP remains stably associated with the GP complex following cleavage by signal peptidase and plays crucial roles in the trafficking of GP through the secretory pathway. Post-translationally, myristoylation is necessary for GP2-mediated fusion activity.

The protein localises to the virion membrane. Its subcellular location is the host endoplasmic reticulum membrane. It localises to the host Golgi apparatus membrane. It is found in the host cell membrane. Class I viral fusion protein that directs fusion of viral and host endosomal membranes, leading to delivery of the nucleocapsid into the cytoplasm. Membrane fusion is mediated by irreversible conformational changes induced upon acidification in the endosome. Functionally, stable signal peptide (SSP): cleaved and functions as a signal peptide. In addition, it is also retained as the third component of the GP complex. The SSP is required for efficient glycoprotein expression, post-translational maturation cleavage of GP1 and GP2, glycoprotein transport to the cell surface plasma membrane, formation of infectious virus particles, and acid pH-dependent glycoprotein-mediated cell fusion. Its function is as follows. Interacts with the host receptor. This Artibeus (neotropical fruit bats) protein is Pre-glycoprotein polyprotein GP complex.